The chain runs to 363 residues: mRNA decay activator protein ZFP36L2-A (363 aa).

The RNA-binding signature appears at 131-136; sequence RYKTEL. 2 consecutive C3H1-type zinc fingers follow at residues 131-159 and 169-197; these read RYKTELCRPFEESGACKYGEKCQFAHGFH and KYKTELCRTFHTIGFCPYGPRCHFIHNAE. The tract at residues 148–189 is RNA-binding; sequence YGEKCQFAHGFHELRSLTRHPKYKTELCRTFHTIGFCPYGPR. The segment at 308–349 is disordered; the sequence is ESPVFDAPPSPPDSLSDRDSYLSGSLSSGSLSGSDSPTLDSN. The segment covering 328–347 has biased composition (low complexity); it reads YLSGSLSSGSLSGSDSPTLD.

Phosphorylated. Widely expressed in adults.

It is found in the nucleus. Its subcellular location is the cytoplasm. Zinc-finger RNA-binding protein that destabilizes several cytoplasmic AU-rich element (ARE)-containing mRNA transcripts by promoting their poly(A) tail removal or deadenylation, and hence provide a mechanism for attenuating protein synthesis. Acts as a 3'-untranslated region (UTR) ARE mRNA-binding adapter protein to communicate signaling events to the mRNA decay machinery. Functions by recruiting the CCR4-NOT deadenylase complex and probably other components of the cytoplasmic RNA decay machinery to the bound ARE-containing mRNAs, and hence promotes ARE-mediated mRNA deadenylation and decay processes. Binds to 3'-UTR ARE of numerous mRNAs. Also induces the degradation of ARE-containing mRNAs even in absence of poly(A) tail. Required for tubulogenesis during pronephros development. This is mRNA decay activator protein ZFP36L2-A (zfp36l2-A) from Xenopus laevis (African clawed frog).